The chain runs to 154 residues: UPF0178 protein GM21_2006 (154 aa).

Belongs to the UPF0178 family.

In Geobacter sp. (strain M21), this protein is UPF0178 protein GM21_2006.